Reading from the N-terminus, the 102-residue chain is Small ribosomal subunit protein uS10 (102 aa).

Belongs to the universal ribosomal protein uS10 family. Part of the 30S ribosomal subunit.

Its function is as follows. Involved in the binding of tRNA to the ribosomes. The polypeptide is Small ribosomal subunit protein uS10 (Brevibacillus brevis (strain 47 / JCM 6285 / NBRC 100599)).